The chain runs to 319 residues: MISEIIKDRAKLVNEKIEELLKEQEPEGLYRAARHYLKAGGKRLRPVITLLSAEALGEDYRKAIHAAIAIETVHNFTLVHDDIMDEDEMRRGVKTVHTLFGIPTAILAGDTLYAEAFEILSMSDAPPENIVRAVSKLARVCVEICEGQFMDMSFEERDSVGESEYLEMVRKKTGVLIGISASIPAVLFGKDESVEKALWNYGIYSGIGFQIHDDLLDISGKGKIGKDWGSDILEGKKTLIVIKAFEEGIELETFGKGRASEEELERDIKKLFDCGAVDYARERAREYIEMAKKNLEVIDESPSRNYLVELADYLIERDH.

Isopentenyl diphosphate is bound by residues K42, R45, and H74. 2 residues coordinate Mg(2+): D81 and D85. R90 serves as a coordination point for dimethylallyl diphosphate. R91 is a binding site for isopentenyl diphosphate. 5 residues coordinate dimethylallyl diphosphate: K172, T173, Q210, K226, and K236.

It belongs to the FPP/GGPP synthase family. In terms of assembly, homodimer. Requires Mg(2+) as cofactor.

The catalysed reaction is isopentenyl diphosphate + dimethylallyl diphosphate = (2E)-geranyl diphosphate + diphosphate. It catalyses the reaction isopentenyl diphosphate + (2E)-geranyl diphosphate = (2E,6E)-farnesyl diphosphate + diphosphate. It carries out the reaction isopentenyl diphosphate + (2E,6E)-farnesyl diphosphate = (2E,6E,10E)-geranylgeranyl diphosphate + diphosphate. The protein operates within isoprenoid biosynthesis; geranyl diphosphate biosynthesis; geranyl diphosphate from dimethylallyl diphosphate and isopentenyl diphosphate: step 1/1. Its pathway is isoprenoid biosynthesis; farnesyl diphosphate biosynthesis; farnesyl diphosphate from geranyl diphosphate and isopentenyl diphosphate: step 1/1. It functions in the pathway isoprenoid biosynthesis; geranylgeranyl diphosphate biosynthesis; geranylgeranyl diphosphate from farnesyl diphosphate and isopentenyl diphosphate: step 1/1. In terms of biological role, catalyzes the addition of 3 molecules of isopentenyl diphosphate (IPP) onto dimethylallyl diphosphate (DMAPP) to form geranylgeranyl pyrophosphate (GGPP). Catalyzes the synthesis of geranylgeranyl pyrophosphate as a major product and of farnesyl pyrophosphate in smaller amounts. This Geoglobus acetivorans protein is Geranylgeranyl pyrophosphate synthase.